The following is a 310-amino-acid chain: Homeobox protein knotted-1-like 2 (310 aa).

The tract at residues 178 to 208 is disordered; sequence SDDGAVSSDEELREDDDIAADDSQQRSNDRD. Over residues 185-197 the composition is skewed to acidic residues; sequence SDEELREDDDIAA. The ELK domain occupies 208-228; sequence DLKDQLLRKFGSHISSLKLEF. Positions 229–292 form a DNA-binding region, homeobox; TALE-type; that stretch reads SKKKKKGKLP…NQRKRHWKPS (64 aa).

Belongs to the TALE/KNOX homeobox family. May form heterodimeric complex with the TALE/BELL protein BEL1, BLH1 and BLH2. Interacts with OFP12 and OFP14. Interacts with BZIP30. As to expression, expressed predominantly in shoot apices of seedlings, in the receptacle and developing pistil of flowers and in axillary buds of inflorescence stems.

It is found in the nucleus. Its function is as follows. May play a role in meristem function, and may be involved in maintaining cells in an undifferentiated, meristematic state. Probably binds to the DNA sequence 5'-TGAC-3'. The chain is Homeobox protein knotted-1-like 2 (KNAT2) from Arabidopsis thaliana (Mouse-ear cress).